The following is a 69-amino-acid chain: Large ribosomal subunit protein uL29 (69 aa).

The protein belongs to the universal ribosomal protein uL29 family.

This chain is Large ribosomal subunit protein uL29, found in Rhodospirillum centenum (strain ATCC 51521 / SW).